Here is a 325-residue protein sequence, read N- to C-terminus: Tetraacyldisaccharide 4'-kinase (325 aa).

55-62 is an ATP binding site; that stretch reads TAGGNGKT.

The protein belongs to the LpxK family.

The enzyme catalyses a lipid A disaccharide + ATP = a lipid IVA + ADP + H(+). Its pathway is glycolipid biosynthesis; lipid IV(A) biosynthesis; lipid IV(A) from (3R)-3-hydroxytetradecanoyl-[acyl-carrier-protein] and UDP-N-acetyl-alpha-D-glucosamine: step 6/6. Its function is as follows. Transfers the gamma-phosphate of ATP to the 4'-position of a tetraacyldisaccharide 1-phosphate intermediate (termed DS-1-P) to form tetraacyldisaccharide 1,4'-bis-phosphate (lipid IVA). The polypeptide is Tetraacyldisaccharide 4'-kinase (Salmonella agona (strain SL483)).